The primary structure comprises 284 residues: Alpha-S1-casein (284 aa).

A signal peptide spans 1–15; it reads MKLLILTCLVAAALA. Disordered regions lie at residues 21–44 and 78–111; these read RRNA…IVKQ and SSAE…SATE. 2 stretches are compositionally biased toward low complexity: residues 24 to 36 and 78 to 99; these read AVSS…NSSS and SSAE…SSSS. Residues Ser-79, Ser-93, Ser-94, Ser-95, Ser-96, Ser-97, Ser-98, and Ser-99 each carry the phosphoserine modification. 10 tandem repeats follow at residues 138 to 143, 144 to 149, 150 to 155, 156 to 161, 162 to 167, 168 to 173, 174 to 179, 180 to 185, 186 to 191, and 192 to 197. The 10 X 6 AA tandem repeats stretch occupies residues 138–197; that stretch reads LLQQASLAQQASLAQQASLAQQALLAQQPSLAQQAALAQQASLAQQASLAQQASLAQKHH.

The protein belongs to the alpha-casein family. In terms of tissue distribution, mammary gland specific. Secreted in milk.

The protein resides in the secreted. Its function is as follows. Important role in the capacity of milk to transport calcium phosphate. This Rattus norvegicus (Rat) protein is Alpha-S1-casein (Csn1s1).